Here is a 229-residue protein sequence, read N- to C-terminus: Cytochrome c oxidase subunit 2 (229 aa).

Topologically, residues 1 to 26 (MSTWANLGLQDSASPLMEQLIFFHDH) are mitochondrial intermembrane. Residues 27 to 48 (ALLILVMITVLVGYLMFMLFFN) form a helical membrane-spanning segment. Residues 49–62 (SYVNRFLLHGQLIE) are Mitochondrial matrix-facing. A helical membrane pass occupies residues 63–82 (MIWTILPAIILLFIAMPSLR). The Mitochondrial intermembrane segment spans residues 83-229 (LLYLLDEINE…IKWISNSVNS (147 aa)). Residues histidine 161, cysteine 196, glutamate 198, cysteine 200, histidine 204, and methionine 207 each contribute to the Cu cation site. Residue glutamate 198 participates in Mg(2+) binding.

The protein belongs to the cytochrome c oxidase subunit 2 family. Component of the cytochrome c oxidase (complex IV, CIV), a multisubunit enzyme composed of a catalytic core of 3 subunits and several supernumerary subunits. The complex exists as a monomer or a dimer and forms supercomplexes (SCs) in the inner mitochondrial membrane with ubiquinol-cytochrome c oxidoreductase (cytochrome b-c1 complex, complex III, CIII). Cu cation serves as cofactor.

Its subcellular location is the mitochondrion inner membrane. The enzyme catalyses 4 Fe(II)-[cytochrome c] + O2 + 8 H(+)(in) = 4 Fe(III)-[cytochrome c] + 2 H2O + 4 H(+)(out). Component of the cytochrome c oxidase, the last enzyme in the mitochondrial electron transport chain which drives oxidative phosphorylation. The respiratory chain contains 3 multisubunit complexes succinate dehydrogenase (complex II, CII), ubiquinol-cytochrome c oxidoreductase (cytochrome b-c1 complex, complex III, CIII) and cytochrome c oxidase (complex IV, CIV), that cooperate to transfer electrons derived from NADH and succinate to molecular oxygen, creating an electrochemical gradient over the inner membrane that drives transmembrane transport and the ATP synthase. Cytochrome c oxidase is the component of the respiratory chain that catalyzes the reduction of oxygen to water. Electrons originating from reduced cytochrome c in the intermembrane space (IMS) are transferred via the dinuclear copper A center (CU(A)) of subunit 2 and heme A of subunit 1 to the active site in subunit 1, a binuclear center (BNC) formed by heme A3 and copper B (CU(B)). The BNC reduces molecular oxygen to 2 water molecules using 4 electrons from cytochrome c in the IMS and 4 protons from the mitochondrial matrix. This is Cytochrome c oxidase subunit 2 (mt:CoII) from Drosophila ambigua (Fruit fly).